The primary structure comprises 236 residues: Aspartate/glutamate leucyltransferase (236 aa).

This sequence belongs to the R-transferase family. Bpt subfamily.

The protein resides in the cytoplasm. The enzyme catalyses N-terminal L-glutamyl-[protein] + L-leucyl-tRNA(Leu) = N-terminal L-leucyl-L-glutamyl-[protein] + tRNA(Leu) + H(+). It catalyses the reaction N-terminal L-aspartyl-[protein] + L-leucyl-tRNA(Leu) = N-terminal L-leucyl-L-aspartyl-[protein] + tRNA(Leu) + H(+). Functionally, functions in the N-end rule pathway of protein degradation where it conjugates Leu from its aminoacyl-tRNA to the N-termini of proteins containing an N-terminal aspartate or glutamate. This is Aspartate/glutamate leucyltransferase from Saccharophagus degradans (strain 2-40 / ATCC 43961 / DSM 17024).